The chain runs to 342 residues: L-threonine 3-dehydrogenase (342 aa).

A Zn(2+)-binding site is contributed by C38. Active-site charge relay system residues include T40 and H43. Zn(2+) contacts are provided by H63, E64, C93, C96, C99, and C107. Residues I175, D195, R200, L262–I264, and I286–Y287 contribute to the NAD(+) site.

This sequence belongs to the zinc-containing alcohol dehydrogenase family. As to quaternary structure, homotetramer. Requires Zn(2+) as cofactor.

Its subcellular location is the cytoplasm. It carries out the reaction L-threonine + NAD(+) = (2S)-2-amino-3-oxobutanoate + NADH + H(+). Its pathway is amino-acid degradation; L-threonine degradation via oxydo-reductase pathway; glycine from L-threonine: step 1/2. Functionally, catalyzes the NAD(+)-dependent oxidation of L-threonine to 2-amino-3-ketobutyrate. The protein is L-threonine 3-dehydrogenase of Burkholderia ambifaria (strain ATCC BAA-244 / DSM 16087 / CCUG 44356 / LMG 19182 / AMMD) (Burkholderia cepacia (strain AMMD)).